The primary structure comprises 280 residues: Shikimate dehydrogenase (NADP(+)) (280 aa).

Shikimate-binding positions include S20 to S22 and T67. The active-site Proton acceptor is the K71. The shikimate site is built by N92 and D107. NADP(+) contacts are provided by residues G131 to A135 and G220. Y222 provides a ligand contact to shikimate. NADP(+) is bound at residue G243.

Belongs to the shikimate dehydrogenase family. In terms of assembly, homodimer.

It carries out the reaction shikimate + NADP(+) = 3-dehydroshikimate + NADPH + H(+). The protein operates within metabolic intermediate biosynthesis; chorismate biosynthesis; chorismate from D-erythrose 4-phosphate and phosphoenolpyruvate: step 4/7. In terms of biological role, involved in the biosynthesis of the chorismate, which leads to the biosynthesis of aromatic amino acids. Catalyzes the reversible NADPH linked reduction of 3-dehydroshikimate (DHSA) to yield shikimate (SA). The protein is Shikimate dehydrogenase (NADP(+)) of Maricaulis maris (strain MCS10) (Caulobacter maris).